The sequence spans 498 residues: METLLKPFPSPLLSIPTPNMYSFKHNSTFPNPTKQKDSRKFHYRNKSSTHFCSFLDLAPTSKPESLDVNISWVDTDLDRAEFDVIIIGTGPAGLRLAEQVSKYGIKVCCVDPSPLSMWPNNYGVWVDEFEKLGLEDCLDHKWPVSCVHISDHKTKYLDRPYGRVSRKKLKLKLLNSCVENRVKFYKAKVLKVKHEEFESSIVCDDGRKISGSLIVDASGYASDFIEYDKPRNHGYQVAHGILAEVDNHPFDLDKMMLMDWRDSHLGNEPYLRVKNTKEPTFLYAMPFDRNLVFLEETSLVSRPMLSYMEVKRRMVARLRHLGIKVRSVLEEEKCVITMGGPLPRIPQNVMAIGGTSGIVHPSSGYMVARSMALAPVLAEAIVESLGSTRMIRGSQLYHRVWNGLWPSDRRRVRECYCFGMETLLKLDLEGTRRLFDAFFDVDPKYWHGFLSSRLSVKELAVLSLYLFGHASNLARLDIVTKCTVPLVKLLGNLAIESL.

Residues 1–52 constitute a chromoplast transit peptide; sequence METLLKPFPSPLLSIPTPNMYSFKHNSTFPNPTKQKDSRKFHYRNKSSTHFC. 84-112 is a binding site for NAD(+); sequence VIIIGTGPAGLRLAEQVSKYGIKVCCVDP. The FLEET motif signature appears at 293-297; that stretch reads FLEET.

It belongs to the lycopene cyclase family. In terms of assembly, monomer. The cofactor is FAD. Requires NADPH as cofactor.

The protein resides in the plastid. Its subcellular location is the chromoplast. The enzyme catalyses all-trans-violaxanthin = all-trans-capsorubin. It carries out the reaction all-trans-antheraxanthin = all-trans-capsanthin. It catalyses the reaction all-trans-violaxanthin = (5R,6S)-5,6-epoxi-capsanthin. The catalysed reaction is (5R,6S)-5,6-epoxi-capsanthin = all-trans-capsorubin. It functions in the pathway carotenoid biosynthesis; capsanthin biosynthesis; capsanthin from antheraxanthin: step 1/1. It participates in carotenoid biosynthesis; capsorubin biosynthesis; capsorubin from violaxanthin: step 1/1. In terms of biological role, catalyzes the conversion of the ubiquitous 5,6-epoxycarotenoids, antheraxanthin and violaxanthin, into capsanthin and capsorubin, respectively. The polypeptide is Capsanthin/capsorubin synthase, chromoplastic (Capsicum annuum (Capsicum pepper)).